The chain runs to 215 residues: Cytochrome b6 (215 aa).

A helical transmembrane segment spans residues 32-52; sequence IFYCLGGITLVCFLIQFATGF. A heme c-binding site is contributed by C35. Residues H86 and H100 each coordinate heme b. The next 3 membrane-spanning stretches (helical) occupy residues 90 to 110, 116 to 136, and 186 to 206; these read ASMM…TGGF, LTWV…VTGY, and AHTF…FLMI. Heme b is bound by residues H187 and H202.

Belongs to the cytochrome b family. PetB subfamily. The 4 large subunits of the cytochrome b6-f complex are cytochrome b6, subunit IV (17 kDa polypeptide, PetD), cytochrome f and the Rieske protein, while the 4 small subunits are PetG, PetL, PetM and PetN. The complex functions as a dimer. It depends on heme b as a cofactor. The cofactor is heme c.

It localises to the cellular thylakoid membrane. Its function is as follows. Component of the cytochrome b6-f complex, which mediates electron transfer between photosystem II (PSII) and photosystem I (PSI), cyclic electron flow around PSI, and state transitions. The chain is Cytochrome b6 from Trichormus variabilis (strain ATCC 29413 / PCC 7937) (Anabaena variabilis).